A 239-amino-acid chain; its full sequence is Ribosomal RNA small subunit methyltransferase G (239 aa).

Residues glycine 78, phenylalanine 83, 129-130 (AE), and arginine 148 contribute to the S-adenosyl-L-methionine site.

It belongs to the methyltransferase superfamily. RNA methyltransferase RsmG family.

The protein resides in the cytoplasm. Functionally, specifically methylates the N7 position of a guanine in 16S rRNA. In Clostridium botulinum (strain 657 / Type Ba4), this protein is Ribosomal RNA small subunit methyltransferase G.